The chain runs to 199 residues: Lipid A acyltransferase PagP (199 aa).

Residues 1–25 (MNYKDIINACILSGVFLLHSPSALA) form the signal peptide. Catalysis depends on residues His-74, Asp-117, and Ser-118.

This sequence belongs to the lipid A palmitoyltransferase family. In terms of assembly, homodimer.

The protein resides in the cell outer membrane. The catalysed reaction is a lipid A + a 1,2-diacyl-sn-glycero-3-phosphocholine = a hepta-acyl lipid A + a 2-acyl-sn-glycero-3-phosphocholine. It catalyses the reaction a lipid IVA + a 1,2-diacyl-sn-glycero-3-phosphocholine = a lipid IVB + a 2-acyl-sn-glycero-3-phosphocholine. The enzyme catalyses a lipid IIA + a 1,2-diacyl-sn-glycero-3-phosphocholine = a lipid IIB + a 2-acyl-sn-glycero-3-phosphocholine. Transfers a fatty acid residue from the sn-1 position of a phospholipid to the N-linked hydroxyfatty acid chain on the proximal unit of lipid A or its precursors. The sequence is that of Lipid A acyltransferase PagP from Yersinia pestis bv. Antiqua (strain Antiqua).